The sequence spans 237 residues: Phosphoribosylaminoimidazole-succinocarboxamide synthase (237 aa).

It belongs to the SAICAR synthetase family.

It catalyses the reaction 5-amino-1-(5-phospho-D-ribosyl)imidazole-4-carboxylate + L-aspartate + ATP = (2S)-2-[5-amino-1-(5-phospho-beta-D-ribosyl)imidazole-4-carboxamido]succinate + ADP + phosphate + 2 H(+). The protein operates within purine metabolism; IMP biosynthesis via de novo pathway; 5-amino-1-(5-phospho-D-ribosyl)imidazole-4-carboxamide from 5-amino-1-(5-phospho-D-ribosyl)imidazole-4-carboxylate: step 1/2. In Erwinia tasmaniensis (strain DSM 17950 / CFBP 7177 / CIP 109463 / NCPPB 4357 / Et1/99), this protein is Phosphoribosylaminoimidazole-succinocarboxamide synthase.